Here is a 348-residue protein sequence, read N- to C-terminus: Ferredoxin--NADP reductase (348 aa).

The FAD site is built by Thr25, Glu44, Gln52, Tyr57, Val97, Phe132, Asp298, and Ser339.

Belongs to the ferredoxin--NADP reductase type 2 family. In terms of assembly, homodimer. Requires FAD as cofactor.

The enzyme catalyses 2 reduced [2Fe-2S]-[ferredoxin] + NADP(+) + H(+) = 2 oxidized [2Fe-2S]-[ferredoxin] + NADPH. This chain is Ferredoxin--NADP reductase, found in Chlorobium phaeobacteroides (strain BS1).